Reading from the N-terminus, the 159-residue chain is Probable inactive acireductone dioxygenase 1 (159 aa).

It belongs to the acireductone dioxygenase (ARD) family.

It is found in the cytoplasm. Its subcellular location is the nucleus. In terms of biological role, probable inactive acireductone dioxygenase. This chain is Probable inactive acireductone dioxygenase 1, found in Caenorhabditis elegans.